A 183-amino-acid polypeptide reads, in one-letter code: uncharacterized protein (183 aa).

Residues Met-27–Leu-170 form the SIS domain.

This sequence belongs to the SIS family. PHI subfamily.

This is an uncharacterized protein from Archaeoglobus fulgidus (strain ATCC 49558 / DSM 4304 / JCM 9628 / NBRC 100126 / VC-16).